A 211-amino-acid polypeptide reads, in one-letter code: Urease accessory protein UreG (211 aa).

11 to 18 is a GTP binding site; it reads GPVGAGKT.

Belongs to the SIMIBI class G3E GTPase family. UreG subfamily. In terms of assembly, homodimer. UreD, UreF and UreG form a complex that acts as a GTP-hydrolysis-dependent molecular chaperone, activating the urease apoprotein by helping to assemble the nickel containing metallocenter of UreC. The UreE protein probably delivers the nickel.

The protein localises to the cytoplasm. In terms of biological role, facilitates the functional incorporation of the urease nickel metallocenter. This process requires GTP hydrolysis, probably effectuated by UreG. The protein is Urease accessory protein UreG of Actinobacillus pleuropneumoniae (Haemophilus pleuropneumoniae).